The following is a 257-amino-acid chain: tRNA (guanine-N(7)-)-methyltransferase (257 aa).

The segment at 1–58 (MQPIEQPGTGPDDITPESQDTNTAESAESGAETGHPRRIRSFVRRAGRTSTGQQRAIN) is disordered. The segment covering 16 to 26 (PESQDTNTAES) has biased composition (polar residues). Residues 36–47 (PRRIRSFVRRAG) show a composition bias toward basic residues. Positions 89, 114, 141, and 164 each coordinate S-adenosyl-L-methionine. Asp164 is a catalytic residue. Lys168 is a substrate binding site. The interval 170 to 175 (RHNKRR) is interaction with RNA. Residues Asp200 and 235–238 (TKFE) each bind substrate.

It belongs to the class I-like SAM-binding methyltransferase superfamily. TrmB family.

The catalysed reaction is guanosine(46) in tRNA + S-adenosyl-L-methionine = N(7)-methylguanosine(46) in tRNA + S-adenosyl-L-homocysteine. Its pathway is tRNA modification; N(7)-methylguanine-tRNA biosynthesis. Its function is as follows. Catalyzes the formation of N(7)-methylguanine at position 46 (m7G46) in tRNA. The polypeptide is tRNA (guanine-N(7)-)-methyltransferase (Ralstonia pickettii (strain 12J)).